Reading from the N-terminus, the 65-residue chain is MDIQQFRGKSVDDLKAHLIELRKEQFSMRMQVAMGQFQKTHEIRRVRRNIARVKYLLSWINRTPA.

Belongs to the universal ribosomal protein uL29 family.

In Xylella fastidiosa (strain Temecula1 / ATCC 700964), this protein is Large ribosomal subunit protein uL29.